Consider the following 199-residue polypeptide: Glycerol-3-phosphate acyltransferase (199 aa).

5 helical membrane-spanning segments follow: residues 3–23, 50–70, 78–98, 113–133, and 154–174; these read AAVW…GVLV, WGPA…AVLV, DWML…SVFL, LLFL…SVIL, and LALG…LLIF.

Belongs to the PlsY family. As to quaternary structure, probably interacts with PlsX.

It localises to the cell inner membrane. The catalysed reaction is an acyl phosphate + sn-glycerol 3-phosphate = a 1-acyl-sn-glycero-3-phosphate + phosphate. It participates in lipid metabolism; phospholipid metabolism. Catalyzes the transfer of an acyl group from acyl-phosphate (acyl-PO(4)) to glycerol-3-phosphate (G3P) to form lysophosphatidic acid (LPA). This enzyme utilizes acyl-phosphate as fatty acyl donor, but not acyl-CoA or acyl-ACP. The protein is Glycerol-3-phosphate acyltransferase of Thermus thermophilus (strain ATCC 27634 / DSM 579 / HB8).